The primary structure comprises 397 residues: Phosphoglycerate kinase (397 aa).

Substrate-binding positions include 21–23 (DFN), R36, 59–62 (HLGR), R118, and R151. ATP contacts are provided by residues K202, G293, E324, and 353–356 (GGDS).

Belongs to the phosphoglycerate kinase family. Monomer.

The protein resides in the cytoplasm. The enzyme catalyses (2R)-3-phosphoglycerate + ATP = (2R)-3-phospho-glyceroyl phosphate + ADP. It participates in carbohydrate degradation; glycolysis; pyruvate from D-glyceraldehyde 3-phosphate: step 2/5. The protein is Phosphoglycerate kinase of Chloroherpeton thalassium (strain ATCC 35110 / GB-78).